We begin with the raw amino-acid sequence, 723 residues long: DNA-binding protein RFX2 (723 aa).

The tract at residues 1–46 is disordered; it reads MQNSEGGADSPASVALRPSAAAPPVPASPQRVLVQAASSAPKGAQM. Residues 10 to 20 show a composition bias toward low complexity; it reads SPASVALRPSA. S28 carries the post-translational modification Phosphoserine. The segment at residues 199-274 is a DNA-binding region (RFX-type winged-helix); that stretch reads HLQWLLDNYE…YHYYGIRLKP (76 aa). The disordered stretch occupies residues 292-332; sequence QQPMHQKPRYRPAQKTDSLGDSGSHSSLHSTPEQTMAAQSQ. Over residues 307–322 the composition is skewed to low complexity; it reads TDSLGDSGSHSSLHST. Polar residues predominate over residues 323-332; sequence PEQTMAAQSQ. S416 carries the post-translational modification Phosphoserine. A disordered region spans residues 689–723; that stretch reads GDERRGSEAGPDAHSLGEPLVKRERSDPNHSLQGI.

This sequence belongs to the RFX family. Homodimer; probably only forms homodimers in testis. Heterodimer; heterodimerizes with RFX1 and RFX3.

Its subcellular location is the nucleus. It localises to the cytoplasm. Functionally, transcription factor that acts as a key regulator of spermatogenesis. Acts by regulating expression of genes required for the haploid phase during spermiogenesis, such as genes required for cilium assembly and function. Recognizes and binds the X-box, a regulatory motif with DNA sequence 5'-GTNRCC(0-3N)RGYAAC-3' present on promoters. Probably activates transcription of the testis-specific histone gene H1-6. This Macaca fascicularis (Crab-eating macaque) protein is DNA-binding protein RFX2 (RFX2).